The chain runs to 46 residues: Iota-conotoxin-like R11.17 (46 aa).

Residues P2 and P11 each carry the 4-hydroxyproline modification. Disulfide bonds link C5–C19, C12–C22, C18–C27, and C21–C38. P29 bears the 4-hydroxyproline mark. Residue F44 is modified to D-phenylalanine.

The protein belongs to the conotoxin I1 superfamily. As to expression, expressed by the venom duct.

The protein resides in the secreted. Iota-conotoxins bind to voltage-gated sodium channels (Nav) and act as agonists by shifting the voltage-dependence of activation to more hyperpolarized levels. Produces general excitatory symptoms. This is Iota-conotoxin-like R11.17 from Conus radiatus (Rayed cone).